The chain runs to 833 residues: MTFYDHTAIEPKWQAFWADNHTFKTGTDASKPKFYALDMFPYPSGAGLHVGHPEGYTATDILSRFKRAQGHNVLHPMGWDAFGLPAEQYAMDTGNDPAEFTAENIANFKRQINALGFSYDWDREVNTTDPNYYKWTQWIFTKLYEKGLAYEAEVPVNWVEELGTAIANEEVLPDGTSERGGYPVVRKPMRQWMLKITAYAERLLEDLEEVDWPESIKDMQRNWIGKSTGANVTFKVKDTDKDFTVFTTRPDTLFGATYAVLAPEHALVDAITTADQAEAVADYKRQASLKSDLARTDLAKEKTGVWTGSYAINPVNGNEMPVWIADYVLASYGTGAIMAVPAHDERDWEFAKQFNLDIIPVLEGGNVEEAAFTEDGLHINSGFLDGLDKASAIAKMVEWLEAEGVGNEKVTYRLRDWLFSRQRYWGEPIPIIHWEDGTSTAVPESELPLVLPVTKDIRPSGTGESPLANVTDWLEVTREDGVKGRRETNTMPQWAGSSWYYLRYIDPHNTEKLADEELLKQWLPVDIYVGGAEHAVLHLLYARFWHKVLYDLGVVPTKEPFQKLFNQGMILGTSYRDSRGALVATDKVEKRDGSFFHVETGEELEQAPAKMSKSLKNVVNPDDVVEQYGADTLRVYEMFMGPLDASIAWSEEGLEGSRKFLDRVYRLITTKEITEENSGALDKVYNETVKAVTEQVDQMKFNTAIAQLMVFVNAANKEDKLFSDYAKGFVQLIAPFAPHLGEELWQALTASGESISYVPWPSYDKSKLVENDVEIVVQIKGKVKAKLVVAKDLSREELQEVALANEKVQAEITGKDIIKVIAVPNKLVNIVIK.

Residues 41–52 (PYPSGAGLHVGH) carry the 'HIGH' region motif. The 'KMSKS' region motif lies at 610 to 614 (KMSKS). Lysine 613 is an ATP binding site.

The protein belongs to the class-I aminoacyl-tRNA synthetase family.

The protein localises to the cytoplasm. It catalyses the reaction tRNA(Leu) + L-leucine + ATP = L-leucyl-tRNA(Leu) + AMP + diphosphate. This is Leucine--tRNA ligase from Streptococcus pyogenes serotype M6 (strain ATCC BAA-946 / MGAS10394).